The primary structure comprises 910 residues: Protein translocase subunit SecA (910 aa).

Residues Q86, 104–108 (GEGKT), and D499 each bind ATP. Zn(2+)-binding residues include C894, C896, C905, and H906.

Belongs to the SecA family. Monomer and homodimer. Part of the essential Sec protein translocation apparatus which comprises SecA, SecYEG and auxiliary proteins SecDF-YajC and YidC. Requires Zn(2+) as cofactor.

Its subcellular location is the cell inner membrane. The protein localises to the cytoplasm. It carries out the reaction ATP + H2O + cellular proteinSide 1 = ADP + phosphate + cellular proteinSide 2.. Part of the Sec protein translocase complex. Interacts with the SecYEG preprotein conducting channel. Has a central role in coupling the hydrolysis of ATP to the transfer of proteins into and across the cell membrane, serving both as a receptor for the preprotein-SecB complex and as an ATP-driven molecular motor driving the stepwise translocation of polypeptide chains across the membrane. This Rickettsia bellii (strain RML369-C) protein is Protein translocase subunit SecA.